The chain runs to 493 residues: NADH-quinone oxidoreductase subunit M (493 aa).

14 helical membrane-spanning segments follow: residues 5 to 25 (PIIS…LLFI), 37 to 57 (VMYV…YILI), 89 to 109 (ISIF…IGSL), 115 to 135 (YIKE…GAFT), 139 to 159 (LLLF…IIGV), 172 to 192 (FFLY…YIYS), 216 to 236 (ILWW…PFHT), 251 to 271 (VILA…VLLP), 280 to 300 (FAIY…LVAL), 308 to 328 (MIAY…FSFT), 334 to 354 (GAIF…LIVG), 375 to 395 (MPVL…LPGT), 411 to 431 (VNVI…VYML), and 458 to 478 (IISI…PSSI).

It belongs to the complex I subunit 4 family.

The protein resides in the cell membrane. It catalyses the reaction a quinone + NADH + 5 H(+)(in) = a quinol + NAD(+) + 4 H(+)(out). NDH-1 shuttles electrons from NADH, via FMN and iron-sulfur (Fe-S) centers, to quinones in the respiratory chain. Couples the redox reaction to proton translocation (for every two electrons transferred, four hydrogen ions are translocated across the cytoplasmic membrane), and thus conserves the redox energy in a proton gradient. The chain is NADH-quinone oxidoreductase subunit M (nuoM) from Rickettsia felis (strain ATCC VR-1525 / URRWXCal2) (Rickettsia azadi).